We begin with the raw amino-acid sequence, 141 residues long: Myosin regulatory light chain cdc4 (141 aa).

A phosphoserine mark is found at Ser2 and Ser6. 3 EF-hand domains span residues 3–38 (TDDS…CGQN), 74–109 (GDPE…LGEK), and 109–141 (KLSN…ILAN). Ca(2+) contacts are provided by Asp87, Asp89, Thr91, Met93, and Glu98.

In terms of assembly, binds to myosin II chains myo2 and myo3. Interacts with vps27 and a PI 4-kinase pik1. Post-translationally, phosphorylated on either Ser-2 or Ser-6 but not both. Phosphorylation is not essential for the function of the protein.

The protein resides in the cytoplasm. In terms of biological role, involved in cytokinesis. Required for the formation and function of the contractile ring. In Schizosaccharomyces pombe (strain 972 / ATCC 24843) (Fission yeast), this protein is Myosin regulatory light chain cdc4 (cdc4).